Consider the following 699-residue polypeptide: Nucleolar and coiled-body phosphoprotein 1 (699 aa).

Residues 10-42 (VPSDLYPLVLGFLRDNQLSEVANKFAKATGATQ) form the LisH domain. The residue at position 33 (K33) is an N6-acetyllysine. Residues 65 to 637 (ERKLQANGPV…VREEEIEVDS (573 aa)) form a disordered region. Glycyl lysine isopeptide (Lys-Gly) (interchain with G-Cter in SUMO2) cross-links involve residues K67 and K76. Residues 84 to 95 (SSDSEDSSEEEE) form an Acidic serine cluster 1 repeat. The 11 X 12 AA approximate repeats of an acidic serine cluster stretch occupies residues 84 to 566 (SSDSEDSSEE…GKAAKNSEEE (483 aa)). The segment covering 86-97 (DSEDSSEEEEEV) has biased composition (acidic residues). Phosphoserine is present on residues S87, S90, and S91. Diphosphoserine is present on S91. Over residues 100-110 (PPAKKAAVPAK) the composition is skewed to low complexity. One copy of the Acidic serine cluster 2 repeat lies at 125-136 (ESSSSEESSDDD). Low complexity predominate over residues 144-159 (QPVQKGVKPQAKAAKA). One copy of the Acidic serine cluster 3 repeat lies at 167 to 178 (SDSDSDSSSEDE). K186 is covalently cross-linked (Glycyl lysine isopeptide (Lys-Gly) (interchain with G-Cter in SUMO2)). A Phosphothreonine modification is found at T188. K193 is covalently cross-linked (Glycyl lysine isopeptide (Lys-Gly) (interchain with G-Cter in SUMO2)). Composition is skewed to low complexity over residues 193-227 (KAQT…SSSS) and 236-261 (AATP…TTPT). Positions 204-382 (RAAPKIANGK…DDEAPSKPAG (179 aa)) are interaction with RPA194. One copy of the Acidic serine cluster 4 repeat lies at 221–232 (SSSSSSSDDSEE). The stretch at 264-275 (SSSSEDSSSDEE) is one Acidic serine cluster 5 repeat. The span at 291–301 (SVPPPSAPPPK) shows a compositional bias: pro residues. Residues 321 to 333 (SSEDSSDESDSSS) show a composition bias toward acidic residues. One copy of the Acidic serine cluster 6 repeat lies at 325 to 336 (SSDESDSSSEEE). Residues K342 and K347 each participate in a glycyl lysine isopeptide (Lys-Gly) (interchain with G-Cter in SUMO2) cross-link. A phosphoserine mark is found at S362, S363, and S366. Residues 363–375 (SDSSDSDSSEDDE) form an Acidic serine cluster 7 repeat. Residues 366–375 (SDSDSSEDDE) show a composition bias toward acidic residues. Over residues 381–397 (AGTTKNSSNKPAVTTKS) the composition is skewed to polar residues. Glycyl lysine isopeptide (Lys-Gly) (interchain with G-Cter in SUMO2) cross-links involve residues K390 and K396. S397 carries the post-translational modification Phosphoserine. Residues 398–409 (PAVKPAAAPKQP) are compositionally biased toward low complexity. Glycyl lysine isopeptide (Lys-Gly) (interchain with G-Cter in SUMO2) cross-links involve residues K401 and K407. Position 415 is an N6-acetyllysine; alternate (K415). Residue K415 forms a Glycyl lysine isopeptide (Lys-Gly) (interchain with G-Cter in SUMO1); alternate linkage. A Glycyl lysine isopeptide (Lys-Gly) (interchain with G-Cter in SUMO2); alternate cross-link involves residue K415. Residues 425-436 (SSEEESSSSEEE) form an Acidic serine cluster 8 repeat. Residues K440 and K452 each participate in a glycyl lysine isopeptide (Lys-Gly) (interchain with G-Cter in SUMO2) cross-link. 2 stretches are compositionally biased toward low complexity: residues 441–476 (MVAT…SDSS) and 498–523 (AGGA…SSSD). S456 carries the phosphoserine modification. The stretch at 470 to 481 (SSDSDSSSSEEE) is one Acidic serine cluster 9 repeat. K505 participates in a covalent cross-link: Glycyl lysine isopeptide (Lys-Gly) (interchain with G-Cter in SUMO2). The residue at position 508 (S508) is a Phosphoserine. The stretch at 519–529 (SSSSDDSSEEE) is one Acidic serine cluster 10 repeat. S538 carries the phosphoserine modification. Residues 547-556 (NGTSALTAQN) are compositionally biased toward polar residues. The Acidic serine cluster 11 repeat unit spans residues 555–566 (QNGKAAKNSEEE). Position 563 is a phosphoserine (S563). Residue K572 forms a Glycyl lysine isopeptide (Lys-Gly) (interchain with G-Cter in SUMO1) linkage. A Glycyl lysine isopeptide (Lys-Gly) (interchain with G-Cter in SUMO2) cross-link involves residue K579. S580 and S582 each carry phosphoserine. Residue K604 forms a Glycyl lysine isopeptide (Lys-Gly) (interchain with G-Cter in SUMO2) linkage. 2 positions are modified to phosphothreonine: T607 and T610. Residue K613 forms a Glycyl lysine isopeptide (Lys-Gly) (interchain with G-Cter in SUMO2) linkage. Residue S622 is modified to Phosphoserine. The segment covering 627-637 (RVREEEIEVDS) has biased composition (basic and acidic residues). The residue at position 643 (S643) is a Phosphoserine. K647 is covalently cross-linked (Glycyl lysine isopeptide (Lys-Gly) (interchain with G-Cter in SUMO2)). K663 is subject to N6-acetyllysine; alternate. K663 participates in a covalent cross-link: Glycyl lysine isopeptide (Lys-Gly) (interchain with G-Cter in SUMO2); alternate. R683 is subject to Omega-N-methylarginine. At S686 the chain carries Phosphoserine. K695 participates in a covalent cross-link: Glycyl lysine isopeptide (Lys-Gly) (interchain with G-Cter in SUMO2). Position 698 is a phosphoserine (S698).

This sequence belongs to the NOLC1 family. As to quaternary structure, heterodimer; heterodimerizes with TCOF1 following monoubiquitination. Interacts with RNA polymerase I 194 kDa subunit (RPA194) and with casein kinase-II. Interacts with DKC1/NAP57, NOP58 and fibrillarin. Undergoes rapid and massive phosphorylation/dephosphorylation cycles on CK2 and PKC sites. NOLC1 is one of the mostly phosphorylated proteins in the cell. Post-translationally, ubiquitinated. Monoubiquitination by the BCR(KBTBD8) complex promotes the formation of a NOLC1-TCOF1 complex that acts as a platform to connect RNA polymerase I with enzymes responsible for ribosomal processing and modification, leading to remodel the translational program of differentiating cells in favor of neural crest specification. In terms of processing, pyrophosphorylated by 5-diphosphoinositol pentakisphosphate (5-IP7). Serine pyrophosphorylation is achieved by Mg(2+)-dependent, but enzyme independent transfer of a beta-phosphate from a inositol pyrophosphate to a pre-phosphorylated serine residue.

The protein localises to the nucleus. Its subcellular location is the nucleolus. The protein resides in the cytoplasm. Nucleolar protein that acts as a regulator of RNA polymerase I by connecting RNA polymerase I with enzymes responsible for ribosomal processing and modification. Required for neural crest specification: following monoubiquitination by the BCR(KBTBD8) complex, associates with TCOF1 and acts as a platform to connect RNA polymerase I with enzymes responsible for ribosomal processing and modification, leading to remodel the translational program of differentiating cells in favor of neural crest specification. Involved in nucleologenesis, possibly by playing a role in the maintenance of the fundamental structure of the fibrillar center and dense fibrillar component in the nucleolus. It has intrinsic GTPase and ATPase activities. In Homo sapiens (Human), this protein is Nucleolar and coiled-body phosphoprotein 1.